Reading from the N-terminus, the 110-residue chain is Putative pterin-4-alpha-carbinolamine dehydratase (110 aa).

This sequence belongs to the pterin-4-alpha-carbinolamine dehydratase family.

The enzyme catalyses (4aS,6R)-4a-hydroxy-L-erythro-5,6,7,8-tetrahydrobiopterin = (6R)-L-erythro-6,7-dihydrobiopterin + H2O. This is Putative pterin-4-alpha-carbinolamine dehydratase from Vibrio vulnificus (strain CMCP6).